The primary structure comprises 435 residues: Cytochrome c biogenesis protein CcsB (435 aa).

3 consecutive transmembrane segments (helical) span residues L14 to L34, S72 to R92, and V162 to A182.

The protein belongs to the Ccs1/CcsB family. As to quaternary structure, may interact with CcsA.

It localises to the cellular thylakoid membrane. Functionally, required during biogenesis of c-type cytochromes (cytochrome c6 and cytochrome f) at the step of heme attachment. The sequence is that of Cytochrome c biogenesis protein CcsB from Synechococcus sp. (strain CC9311).